Here is a 369-residue protein sequence, read N- to C-terminus: tRNA/tmRNA (uracil-C(5))-methyltransferase (369 aa).

Positions 190, 218, 223, 239, and 301 each coordinate S-adenosyl-L-methionine. The active-site Nucleophile is the C326. E360 serves as the catalytic Proton acceptor.

The protein belongs to the class I-like SAM-binding methyltransferase superfamily. RNA M5U methyltransferase family. TrmA subfamily.

It carries out the reaction uridine(54) in tRNA + S-adenosyl-L-methionine = 5-methyluridine(54) in tRNA + S-adenosyl-L-homocysteine + H(+). The enzyme catalyses uridine(341) in tmRNA + S-adenosyl-L-methionine = 5-methyluridine(341) in tmRNA + S-adenosyl-L-homocysteine + H(+). In terms of biological role, dual-specificity methyltransferase that catalyzes the formation of 5-methyluridine at position 54 (m5U54) in all tRNAs, and that of position 341 (m5U341) in tmRNA (transfer-mRNA). In Vibrio parahaemolyticus serotype O3:K6 (strain RIMD 2210633), this protein is tRNA/tmRNA (uracil-C(5))-methyltransferase.